A 394-amino-acid polypeptide reads, in one-letter code: UDP-glucose 6-dehydrogenase (394 aa).

NAD(+) is bound by residues 2–19, Val11, Asp29, Lys34, Thr83, Thr118, and Glu145; that span reads KIAI…AVLL. Substrate-binding positions include 141–145, Lys203, Asn207, 248–252, and Gly256; these read EFLRE and YNNPS. Residue Tyr258 participates in NAD(+) binding. The active-site Nucleophile is Cys259. Residue Lys262 coordinates NAD(+). Lys313 provides a ligand contact to substrate. Arg320 is a binding site for NAD(+).

Belongs to the UDP-glucose/GDP-mannose dehydrogenase family.

It carries out the reaction UDP-alpha-D-glucose + 2 NAD(+) + H2O = UDP-alpha-D-glucuronate + 2 NADH + 3 H(+). Its pathway is nucleotide-sugar biosynthesis; UDP-alpha-D-glucuronate biosynthesis; UDP-alpha-D-glucuronate from UDP-alpha-D-glucose: step 1/1. Catalyzes the formation of UDP-glucuronic acid which is required for capsular hyaluronic acid synthesis. Directly responsible for the transformation of some unencapsulated serotype-3 SP mutants to the encapsulated phenotype. This is UDP-glucose 6-dehydrogenase (cap3A) from Streptococcus pneumoniae.